The chain runs to 249 residues: tRNA (guanine-N(1)-)-methyltransferase (249 aa).

Residues Gly-113 and 133-138 (VGDYVL) each bind S-adenosyl-L-methionine.

Belongs to the RNA methyltransferase TrmD family. As to quaternary structure, homodimer.

Its subcellular location is the cytoplasm. It carries out the reaction guanosine(37) in tRNA + S-adenosyl-L-methionine = N(1)-methylguanosine(37) in tRNA + S-adenosyl-L-homocysteine + H(+). Functionally, specifically methylates guanosine-37 in various tRNAs. The polypeptide is tRNA (guanine-N(1)-)-methyltransferase (Tolumonas auensis (strain DSM 9187 / NBRC 110442 / TA 4)).